Reading from the N-terminus, the 133-residue chain is uncharacterized protein (133 aa).

To E.coli ydcQ.

This is an uncharacterized protein from Haemophilus phage HP1 (strain HP1c1) (Bacteriophage HP1).